A 270-amino-acid chain; its full sequence is MSDLHNESIFITGGGSGLGLALVERFIEEGAQVATLELSAAKVASLRQRFGEHILAVEGNVTCYADYQRAVNQILTRSGKLDCFIGNAGIWDHNASLVNTPAETLETGFHELFNVNVLGYLLGAKACAPALIASEGSMIFTLSNAAWYPGGGGPLYTASKHAATGLIRQLAYELAPKVRVNGVGPCGMASDLRGPQALGQSETSIMQSLTPEKIAAILPLQFFPQPADFTGPYVMLASRRNNRALSGVMINADAGLAIRGIRHVAAGLDL.

Residue 10-34 coordinates NAD(+); that stretch reads FITGGGSGLGLALVERFIEEGAQVA. Ser-143 is a substrate binding site. Tyr-156 serves as the catalytic Proton acceptor.

It belongs to the short-chain dehydrogenases/reductases (SDR) family.

The catalysed reaction is 3-(cis-5,6-dihydroxycyclohexa-1,3-dien-1-yl)propanoate + NAD(+) = 3-(2,3-dihydroxyphenyl)propanoate + NADH + H(+). The enzyme catalyses (2E)-3-(cis-5,6-dihydroxycyclohexa-1,3-dien-1-yl)prop-2-enoate + NAD(+) = (2E)-3-(2,3-dihydroxyphenyl)prop-2-enoate + NADH + H(+). Its pathway is aromatic compound metabolism; 3-phenylpropanoate degradation. Converts 3-phenylpropionate-dihydrodiol (PP-dihydrodiol) and cinnamic acid-dihydrodiol (CI-dihydrodiol) into 3-(2,3-dihydroxylphenyl)propanoic acid (DHPP) and 2,3-dihydroxicinnamic acid (DHCI), respectively. The polypeptide is 3-phenylpropionate-dihydrodiol/cinnamic acid-dihydrodiol dehydrogenase (Escherichia coli O17:K52:H18 (strain UMN026 / ExPEC)).